Reading from the N-terminus, the 629-residue chain is 1-deoxy-D-xylulose-5-phosphate synthase (629 aa).

Thiamine diphosphate contacts are provided by residues His-73 and 114–116; that span reads GHA. Asp-145 serves as a coordination point for Mg(2+). Thiamine diphosphate-binding positions include 146–147, Asn-174, Tyr-284, and Glu-360; that span reads GA. A Mg(2+)-binding site is contributed by Asn-174.

Belongs to the transketolase family. DXPS subfamily. As to quaternary structure, homodimer. Mg(2+) is required as a cofactor. The cofactor is thiamine diphosphate.

The catalysed reaction is D-glyceraldehyde 3-phosphate + pyruvate + H(+) = 1-deoxy-D-xylulose 5-phosphate + CO2. The protein operates within metabolic intermediate biosynthesis; 1-deoxy-D-xylulose 5-phosphate biosynthesis; 1-deoxy-D-xylulose 5-phosphate from D-glyceraldehyde 3-phosphate and pyruvate: step 1/1. In terms of biological role, catalyzes the acyloin condensation reaction between C atoms 2 and 3 of pyruvate and glyceraldehyde 3-phosphate to yield 1-deoxy-D-xylulose-5-phosphate (DXP). The chain is 1-deoxy-D-xylulose-5-phosphate synthase from Thermomicrobium roseum (strain ATCC 27502 / DSM 5159 / P-2).